The primary structure comprises 574 residues: Arginine--tRNA ligase (574 aa).

The 'HIGH' region signature appears at 121-131; sequence PNIAKEMHIGH.

This sequence belongs to the class-I aminoacyl-tRNA synthetase family. As to quaternary structure, monomer.

The protein localises to the cytoplasm. It catalyses the reaction tRNA(Arg) + L-arginine + ATP = L-arginyl-tRNA(Arg) + AMP + diphosphate. The protein is Arginine--tRNA ligase of Buchnera aphidicola subsp. Acyrthosiphon pisum (strain Tuc7).